A 284-amino-acid polypeptide reads, in one-letter code: Nucleotide-binding protein NMCC_0698 (284 aa).

Residue 8–15 (GLSGSGKS) participates in ATP binding. Residue 58–61 (DVRS) participates in GTP binding.

It belongs to the RapZ-like family.

In terms of biological role, displays ATPase and GTPase activities. In Neisseria meningitidis serogroup C (strain 053442), this protein is Nucleotide-binding protein NMCC_0698.